We begin with the raw amino-acid sequence, 334 residues long: Thiamine-binding periplasmic protein (334 aa).

An N-terminal signal peptide occupies residues M1–A23. Thiamine contacts are provided by residues D64–G65, A166–T167, W202, and Y220–S223.

It belongs to the bacterial solute-binding protein 1 family. As to quaternary structure, the complex is composed of two ATP-binding proteins (ThiQ), two transmembrane proteins (ThiP) and a solute-binding protein (ThiB).

It is found in the periplasm. Functionally, part of the ABC transporter complex ThiBPQ involved in thiamine import. This is Thiamine-binding periplasmic protein (thiB) from Brucella abortus biovar 1 (strain 9-941).